The sequence spans 416 residues: Creatine kinase U-type, mitochondrial (416 aa).

The transit peptide at 1–39 (MAGPFSRLLSARPGLRLLALAGAGSLAAGFLLRPEPIRA) directs the protein to the mitochondrion. A cardiolipin-binding region spans residues 40–63 (ASERRRQYPPSAEYPDLRKHNNCM). Residues 44–131 (RRQYPPSAEY…FDPVIQERHN (88 aa)) form the Phosphagen kinase N-terminal domain. Residue Ser-151 is modified to Phosphoserine. A Phosphagen kinase C-terminal domain is found at 158-400 (YVLSSRVRTG…NYLIDCERRL (243 aa)). 161 to 165 (SSRVR) contacts ATP. Phosphoserine is present on Ser-196. Thr-213 is subject to Phosphothreonine. His-224 lines the ATP pocket. Phosphoserine is present on Ser-232. Residues Arg-269, Arg-325, and 353-358 (RGTGGV) contribute to the ATP site. Phosphothreonine is present on Thr-355. Phosphoserine is present on Ser-365. Position 368 (Asp-368) interacts with ATP.

This sequence belongs to the ATP:guanido phosphotransferase family. Exists as an octamer composed of four MTCK homodimers.

It localises to the mitochondrion inner membrane. The catalysed reaction is creatine + ATP = N-phosphocreatine + ADP + H(+). Functionally, reversibly catalyzes the transfer of phosphate between ATP and various phosphogens (e.g. creatine phosphate). Creatine kinase isoenzymes play a central role in energy transduction in tissues with large, fluctuating energy demands, such as skeletal muscle, heart, brain and spermatozoa. The chain is Creatine kinase U-type, mitochondrial (CKMT1) from Sus scrofa (Pig).